Reading from the N-terminus, the 167-residue chain is Small ribosomal subunit protein uS5 (167 aa).

The S5 DRBM domain occupies 12–75 (LEDQVVSINR…DAAKKSLIEV (64 aa)).

The protein belongs to the universal ribosomal protein uS5 family. In terms of assembly, part of the 30S ribosomal subunit. Contacts proteins S4 and S8.

With S4 and S12 plays an important role in translational accuracy. Its function is as follows. Located at the back of the 30S subunit body where it stabilizes the conformation of the head with respect to the body. This Lacticaseibacillus paracasei (strain ATCC 334 / BCRC 17002 / CCUG 31169 / CIP 107868 / KCTC 3260 / NRRL B-441) (Lactobacillus paracasei) protein is Small ribosomal subunit protein uS5.